Reading from the N-terminus, the 298-residue chain is uncharacterized protein (298 aa).

One can recognise an ABC transporter domain in the interval 2 to 229 (LTIDHVTKTF…FGKKNVTIHS (228 aa)). 34 to 41 (GANGAGKT) is a binding site for ATP.

It belongs to the ABC transporter superfamily.

It localises to the cell membrane. This is an uncharacterized protein from Bacillus subtilis (strain 168).